Here is a 389-residue protein sequence, read N- to C-terminus: Sulfate adenylyltransferase (389 aa).

It belongs to the sulfate adenylyltransferase family.

The catalysed reaction is sulfate + ATP + H(+) = adenosine 5'-phosphosulfate + diphosphate. Its pathway is sulfur metabolism; hydrogen sulfide biosynthesis; sulfite from sulfate: step 1/3. This is Sulfate adenylyltransferase from Deinococcus geothermalis (strain DSM 11300 / CIP 105573 / AG-3a).